The following is a 161-amino-acid chain: Large ribosomal subunit protein uL11 (161 aa).

The protein belongs to the universal ribosomal protein uL11 family. In terms of assembly, part of the ribosomal stalk of the 50S ribosomal subunit. Interacts with L10 and the large rRNA to form the base of the stalk. L10 forms an elongated spine to which L12 dimers bind in a sequential fashion forming a multimeric L10(L12)X complex.

Forms part of the ribosomal stalk which helps the ribosome interact with GTP-bound translation factors. This is Large ribosomal subunit protein uL11 from Methanosarcina acetivorans (strain ATCC 35395 / DSM 2834 / JCM 12185 / C2A).